The following is a 369-amino-acid chain: MVRIVPSARRTRAPAKLDGRSTPDIAMSLVTTASPLTTADTYTPAADSDAPPAVRGELVINLPMRHAGQRELRLRYELVGAEQAPVVFVAGGISAHRHLAASAVFPEKGWVEGLVGAGRALDPASRRLLAFDFLGADGSLDAPIDTADQADAIAALLDALGIARLHGFVGYSYGALVGLQFASRHAARLHTLVAVSGAHRAHPYAAAWRALQRRAVALGQLQCAEHHGLALARQFAMLSYRTPEEFSERFDAPPELINGRVRVAAEDYLDAAGAQYVARTPVNAYLRLSESIDLHRIDPAAVAVPTVVVAVEGDRLVPLADLVSLVEGLGPRGSLRVLRSPFGHDAFLKEIDRIDAILTTALRTTGETA.

A disordered region spans residues methionine 1–serine 21. In terms of domain architecture, AB hydrolase-1 spans valine 86–glutamate 350. The interval glycine 92–alanine 95 is important for substrate specificity. The Nucleophile role is filled by serine 172. Substrate is bound at residue arginine 233. Residues aspartate 314 and histidine 344 contribute to the active site. Position 345 (aspartate 345) interacts with substrate.

Belongs to the AB hydrolase superfamily. MetX family. As to quaternary structure, homodimer.

The protein localises to the cytoplasm. The catalysed reaction is L-homoserine + succinyl-CoA = O-succinyl-L-homoserine + CoA. It functions in the pathway amino-acid biosynthesis; L-methionine biosynthesis via de novo pathway; O-succinyl-L-homoserine from L-homoserine: step 1/1. Transfers a succinyl group from succinyl-CoA to L-homoserine, forming succinyl-L-homoserine. This is Homoserine O-succinyltransferase from Xanthomonas campestris pv. campestris (strain ATCC 33913 / DSM 3586 / NCPPB 528 / LMG 568 / P 25).